A 154-amino-acid chain; its full sequence is UPF0178 protein SPO3827 (154 aa).

It belongs to the UPF0178 family.

The protein is UPF0178 protein SPO3827 of Ruegeria pomeroyi (strain ATCC 700808 / DSM 15171 / DSS-3) (Silicibacter pomeroyi).